Here is a 38-residue protein sequence, read N- to C-terminus: Photosystem II reaction center protein L (38 aa).

The helical transmembrane segment at 17 to 37 (SLFIGLLLVLVLALLFSSYFF) threads the bilayer.

Belongs to the PsbL family. As to quaternary structure, PSII is composed of 1 copy each of membrane proteins PsbA, PsbB, PsbC, PsbD, PsbE, PsbF, PsbH, PsbI, PsbJ, PsbK, PsbL, PsbM, PsbT, PsbX, PsbY, PsbZ, Psb30/Ycf12, peripheral proteins PsbO, CyanoQ (PsbQ), PsbU, PsbV and a large number of cofactors. It forms dimeric complexes.

It localises to the cellular thylakoid membrane. In terms of biological role, one of the components of the core complex of photosystem II (PSII). PSII is a light-driven water:plastoquinone oxidoreductase that uses light energy to abstract electrons from H(2)O, generating O(2) and a proton gradient subsequently used for ATP formation. It consists of a core antenna complex that captures photons, and an electron transfer chain that converts photonic excitation into a charge separation. This subunit is found at the monomer-monomer interface and is required for correct PSII assembly and/or dimerization. This Acaryochloris marina (strain MBIC 11017) protein is Photosystem II reaction center protein L.